A 97-amino-acid polypeptide reads, in one-letter code: Defensin-A2 (97 aa).

An N-terminal signal peptide occupies residues 1 to 19 (MRTLSLLLALLFLAAQTLA). A propeptide spanning residues 20–61 (QPIDEGAEEVITEEPEITETQDPTTIMLIERGIGGDSTDATR) is cleaved from the precursor. Intrachain disulfides connect cysteine 66/cysteine 93, cysteine 68/cysteine 82, and cysteine 72/cysteine 92. Residues 96 to 97 (TS) constitute a propeptide that is removed on maturation.

The protein belongs to the alpha-defensin family. As to expression, highly expressed in intestine, expressed at lower levels in spleen, and at very low levels in kidney and lung.

It localises to the secreted. Functionally, has antimicrobial activity. The sequence is that of Defensin-A2 from Ornithorhynchus anatinus (Duckbill platypus).